A 239-amino-acid chain; its full sequence is Cytochrome c oxidase subunit 2 (239 aa).

Residues 1–26 are Mitochondrial intermembrane-facing; sequence MATPAQLGLMDAASPVMEEMIYFHDH. The chain crosses the membrane as a helical span at residues 27 to 48; the sequence is VMLVLILITCLIFYSMLVLISS. Residues 49 to 62 are Mitochondrial matrix-facing; the sequence is KYIYRFLTDGHVIE. The chain crosses the membrane as a helical span at residues 63–82; the sequence is TVWTVIPAIILVVVALPSLK. Residues 83-239 are Mitochondrial intermembrane-facing; it reads LLYLTDELDN…ESLGSLNMKR (157 aa). Positions 161, 196, 198, 200, 204, and 207 each coordinate Cu cation. A Mg(2+)-binding site is contributed by Glu-198.

This sequence belongs to the cytochrome c oxidase subunit 2 family. In terms of assembly, component of the cytochrome c oxidase (complex IV, CIV), a multisubunit enzyme composed of a catalytic core of 3 subunits and several supernumerary subunits. The complex exists as a monomer or a dimer and forms supercomplexes (SCs) in the inner mitochondrial membrane with ubiquinol-cytochrome c oxidoreductase (cytochrome b-c1 complex, complex III, CIII). Requires Cu cation as cofactor.

It localises to the mitochondrion inner membrane. It catalyses the reaction 4 Fe(II)-[cytochrome c] + O2 + 8 H(+)(in) = 4 Fe(III)-[cytochrome c] + 2 H2O + 4 H(+)(out). Functionally, component of the cytochrome c oxidase, the last enzyme in the mitochondrial electron transport chain which drives oxidative phosphorylation. The respiratory chain contains 3 multisubunit complexes succinate dehydrogenase (complex II, CII), ubiquinol-cytochrome c oxidoreductase (cytochrome b-c1 complex, complex III, CIII) and cytochrome c oxidase (complex IV, CIV), that cooperate to transfer electrons derived from NADH and succinate to molecular oxygen, creating an electrochemical gradient over the inner membrane that drives transmembrane transport and the ATP synthase. Cytochrome c oxidase is the component of the respiratory chain that catalyzes the reduction of oxygen to water. Electrons originating from reduced cytochrome c in the intermembrane space (IMS) are transferred via the dinuclear copper A center (CU(A)) of subunit 2 and heme A of subunit 1 to the active site in subunit 1, a binuclear center (BNC) formed by heme A3 and copper B (CU(B)). The BNC reduces molecular oxygen to 2 water molecules using 4 electrons from cytochrome c in the IMS and 4 protons from the mitochondrial matrix. The chain is Cytochrome c oxidase subunit 2 (COII) from Branchiostoma lanceolatum (Common lancelet).